The chain runs to 413 residues: Multifunctional CCA protein (413 aa).

Positions 8 and 11 each coordinate ATP. Residues glycine 8 and arginine 11 each contribute to the CTP site. Mg(2+)-binding residues include aspartate 21 and aspartate 23. Positions 91, 143, and 146 each coordinate ATP. CTP is bound by residues arginine 91, arginine 143, and arginine 146. The region spanning 232-333 (TGVHVMMVID…VRLLERADAL (102 aa)) is the HD domain.

Belongs to the tRNA nucleotidyltransferase/poly(A) polymerase family. Bacterial CCA-adding enzyme type 1 subfamily. Monomer. Can also form homodimers and oligomers. Requires Mg(2+) as cofactor. Ni(2+) serves as cofactor.

It catalyses the reaction a tRNA precursor + 2 CTP + ATP = a tRNA with a 3' CCA end + 3 diphosphate. The enzyme catalyses a tRNA with a 3' CCA end + 2 CTP + ATP = a tRNA with a 3' CCACCA end + 3 diphosphate. Functionally, catalyzes the addition and repair of the essential 3'-terminal CCA sequence in tRNAs without using a nucleic acid template. Adds these three nucleotides in the order of C, C, and A to the tRNA nucleotide-73, using CTP and ATP as substrates and producing inorganic pyrophosphate. tRNA 3'-terminal CCA addition is required both for tRNA processing and repair. Also involved in tRNA surveillance by mediating tandem CCA addition to generate a CCACCA at the 3' terminus of unstable tRNAs. While stable tRNAs receive only 3'-terminal CCA, unstable tRNAs are marked with CCACCA and rapidly degraded. This Burkholderia pseudomallei (strain K96243) protein is Multifunctional CCA protein.